The primary structure comprises 1327 residues: P-glycoprotein 14 (1327 aa).

Basic and acidic residues predominate over residues 1 to 17; the sequence is MAPKDDPDNRGFDDQRR. The disordered stretch occupies residues 1-23; the sequence is MAPKDDPDNRGFDDQRRPSQRST. Residues 1–104 lie on the Cytoplasmic side of the membrane; sequence MAPKDDPDNR…RYGKKFDYLL (104 aa). A helical transmembrane segment spans residues 105–125; that stretch reads LFIGTICAIISGVSQPILALV. An ABC transmembrane type-1 1 domain is found at 106–394; the sequence is FIGTICAIIS…ISPHMMVLLN (289 aa). The Extracellular segment spans residues 126 to 151; it reads SGRVTNALLVYPPTSKQFRNKANENV. The chain crosses the membrane as a helical span at residues 152–172; the sequence is YIFLGIGIFISITNFIQYMCF. Over 173-225 the chain is Cytoplasmic; that stretch reads QHCCTRVMAQMRHRFVYSVLRQNAGWFDKNHSGTITTKLNDSMERIREGIGDK. The chain crosses the membrane as a helical span at residues 226-246; the sequence is LGVLLRGFAMLIAAIVVAYIY. Glutamate 247 is a topological domain (extracellular). A helical membrane pass occupies residues 248–268; that stretch reads WRLASMMLGVAPTCCICMSLL. Topologically, residues 269–331 are cytoplasmic; that stretch reads ARQMTSTTIK…KFAVWKGFWS (63 aa). A helical transmembrane segment spans residues 332–352; that stretch reads GFFGGLFFFWLFSFLGCGMLY. At 353–364 the chain is on the extracellular side; sequence GAYLLKVGIITT. Residues 365 to 385 form a helical membrane-spanning segment; that stretch reads PGDVFIVVMSMLLGAYFLGLI. The Cytoplasmic segment spans residues 386-766; the sequence is SPHMMVLLNA…NAKGNYLYMF (381 aa). One can recognise an ABC transporter 1 domain in the interval 429–665; the sequence is VKFENVHFRY…GGRYFDLVKA (237 aa). 464–471 contacts ATP; the sequence is GHSGCGKS. The interval 671–721 is disordered; it reads DPEATEEFEEEEIDLDDTSRSSRRSSMTSARSGSEAFRRGNSLNDSFSGSK. Residues 673 to 686 show a composition bias toward acidic residues; sequence EATEEFEEEEIDLD. Low complexity predominate over residues 694–704; it reads RSSMTSARSGS. Polar residues predominate over residues 711 to 721; the sequence is NSLNDSFSGSK. In terms of domain architecture, ABC transmembrane type-1 2 spans 766-1053; sequence FLGTVFALIR…SAQYFPEFVK (288 aa). A helical membrane pass occupies residues 767–789; it reads LGTVFALIRGLELPALALIFGWV. Over 790-805 the chain is Extracellular; it reads FEGFTFVPYGGRMMHR. The helical transmembrane segment at 806 to 826 threads the bilayer; sequence MAMAVIAFASVGVGVWFSQLA. The Cytoplasmic portion of the chain corresponds to 827-886; the sequence is SSVLFAVVSENLSMRFRVQSFRNLLYQDASYFDNPAHAPGKLITRLASDAPNIKAVVDAR. The chain crosses the membrane as a helical span at residues 887 to 907; it reads MLQVIYALAAIIANIAIAFIY. Residues 908-910 are Extracellular-facing; the sequence is CWQ. The helical transmembrane segment at 911 to 931 threads the bilayer; that stretch reads IGILGTSLILLLAFVMIGLAY. Residues 932–996 lie on the Cytoplasmic side of the membrane; it reads KISLMNVEQI…KGMIEAINYS (65 aa). The chain crosses the membrane as a helical span at residues 997 to 1017; sequence LTQSFMYFMMCFTYAVGIRII. Topologically, residues 1018–1030 are extracellular; it reads YQGDKSSDDTFKG. A helical membrane pass occupies residues 1031–1051; it reads IIAMMLGAVAVMNSAQYFPEF. Over 1052–1327 the chain is Cytoplasmic; sequence VKAKTAAGML…KLIKKQDLAV (276 aa). The ABC transporter 2 domain occupies 1086–1322; sequence ILFENVKFSY…KGRYYKLIKK (237 aa). An ATP-binding site is contributed by 1121–1128; sequence GPSGSGKS.

Belongs to the ABC transporter superfamily. ABCB family. Multidrug resistance exporter (TC 3.A.1.201) subfamily. Expressed in pharyngeal epithelial cells that surround the anterior pharyngeal cuticle. Shares same expression pattern as sms-5.

It is found in the apical cell membrane. Its function is as follows. Contributes to the establishment of a polar lipid barrier to block small molecule passage into the pharyngeal cuticle. Probably exports polar lipids into the developing pharyngeal cuticle to protect against xenobiotic insult. Likely functions in the same pathway as sphingomyelin synthase sms-5. In Caenorhabditis elegans, this protein is P-glycoprotein 14.